The chain runs to 160 residues: MKSIVNDKILLTQQKLEEIEKELEHLINVERVNVIQEIKDARSQGDLSENAEYDVAREKQGIIESRIRELETIISKAKIIKADLGSSRVSIGSKVSLENVESGEIQTFQIVSSIDADPFKSKISNFSPIAQALLGQHQGDEVEVDVNEKYSVRILEVINE.

A coiled-coil region spans residues 3-84; that stretch reads SIVNDKILLT…SKAKIIKADL (82 aa).

Belongs to the GreA/GreB family.

In terms of biological role, necessary for efficient RNA polymerase transcription elongation past template-encoded arresting sites. The arresting sites in DNA have the property of trapping a certain fraction of elongating RNA polymerases that pass through, resulting in locked ternary complexes. Cleavage of the nascent transcript by cleavage factors such as GreA or GreB allows the resumption of elongation from the new 3'terminus. GreA releases sequences of 2 to 3 nucleotides. This Mesomycoplasma hyopneumoniae (strain 7448) (Mycoplasma hyopneumoniae) protein is Transcription elongation factor GreA.